A 79-amino-acid chain; its full sequence is CATR tumorigenic conversion 1 protein (79 aa).

The protein is CATR tumorigenic conversion 1 protein (CATR1) of Homo sapiens (Human).